Reading from the N-terminus, the 446-residue chain is Glucose-6-phosphate isomerase (446 aa).

Catalysis depends on Glu-288, which acts as the Proton donor. Residues His-309 and Lys-423 contribute to the active site.

Belongs to the GPI family.

It is found in the cytoplasm. The enzyme catalyses alpha-D-glucose 6-phosphate = beta-D-fructose 6-phosphate. It functions in the pathway carbohydrate biosynthesis; gluconeogenesis. Its pathway is carbohydrate degradation; glycolysis; D-glyceraldehyde 3-phosphate and glycerone phosphate from D-glucose: step 2/4. Catalyzes the reversible isomerization of glucose-6-phosphate to fructose-6-phosphate. This is Glucose-6-phosphate isomerase from Lactobacillus delbrueckii subsp. bulgaricus (strain ATCC 11842 / DSM 20081 / BCRC 10696 / JCM 1002 / NBRC 13953 / NCIMB 11778 / NCTC 12712 / WDCM 00102 / Lb 14).